The following is a 750-amino-acid chain: NAD(P)H-quinone oxidoreductase subunit 5, chloroplastic (750 aa).

The next 16 membrane-spanning stretches (helical) occupy residues 9–29, 39–59, 89–109, 125–145, 147–167, 185–205, 219–239, 267–287, 290–310, 327–347, 354–374, 396–416, 427–447, 554–574, 606–626, and 728–748; these read WIIP…LLLF, IWAF…LDLS, IDSL…LVLI, FAYM…SNLI, IYFF…FWFT, GDFG…SLEF, NEMN…GSVA, ATMV…FVLL, IMNT…TLAI, LGYM…FHLI, ALLF…VGYS, FFFL…CFWS, YSPI…FYMF, FSML…ISFS, FFTN…IASF, and ILLY…FVFI.

The protein belongs to the complex I subunit 5 family. NDH is composed of at least 16 different subunits, 5 of which are encoded in the nucleus.

It localises to the plastid. Its subcellular location is the chloroplast thylakoid membrane. It catalyses the reaction a plastoquinone + NADH + (n+1) H(+)(in) = a plastoquinol + NAD(+) + n H(+)(out). The catalysed reaction is a plastoquinone + NADPH + (n+1) H(+)(in) = a plastoquinol + NADP(+) + n H(+)(out). Its function is as follows. NDH shuttles electrons from NAD(P)H:plastoquinone, via FMN and iron-sulfur (Fe-S) centers, to quinones in the photosynthetic chain and possibly in a chloroplast respiratory chain. The immediate electron acceptor for the enzyme in this species is believed to be plastoquinone. Couples the redox reaction to proton translocation, and thus conserves the redox energy in a proton gradient. This is NAD(P)H-quinone oxidoreductase subunit 5, chloroplastic (ndhF) from Phaseolus vulgaris (Kidney bean).